The primary structure comprises 876 residues: MAP7 domain-containing protein 3 (876 aa).

Disordered stretches follow at residues 30-139 (AEER…KFKA), 162-200 (GGVM…VDNT), and 402-438 (TEAP…IDKR). Residues 39–54 (INSSAGANKRSSSTPD) show a composition bias toward polar residues. Residues 58 to 136 (LKNDVKQQLA…KQKQAEDTEK (79 aa)) are a coiled coil. Basic and acidic residues-rich tracts occupy residues 60 to 139 (NDVK…KFKA) and 169 to 196 (KSGK…DMQH). Phosphoserine occurs at positions 417 and 483. Coiled coils occupy residues 549 to 578 (IQIR…IARK) and 626 to 658 (SAMM…RRKA). Disordered stretches follow at residues 558-683 (QSKN…EIFP) and 742-783 (IQGK…NPNH). 2 stretches are compositionally biased toward basic and acidic residues: residues 559–590 (SKNE…DKVP) and 630–659 (KSRD…RKAS). The span at 665 to 679 (SEDEADDEGESEDSL) shows a compositional bias: acidic residues. The span at 750-763 (SAKKPPTRPIRSRK) shows a compositional bias: basic residues. Residues 771–782 (IRPTQSASSNPN) show a composition bias toward polar residues.

Belongs to the MAP7 family. High expression in lung, skeletal muscle, brain, and kidney, with much weaker expression in spleen, small intestine, liver, and heart.

The protein resides in the cytoplasm. It localises to the cytoskeleton. The protein localises to the spindle. Its function is as follows. Promotes the assembly and stability of microtubules. The protein is MAP7 domain-containing protein 3 (Map7d3) of Mus musculus (Mouse).